An 827-amino-acid chain; its full sequence is Thymine dioxygenase JBP1 (827 aa).

The thymine dioxygenase stretch occupies residues 62–264 (QIIGVVLREA…RLTCVFYYRA (203 aa)). Fe cation-binding residues include His189, Asp191, and His239. Arg255 provides a ligand contact to 2-oxoglutarate. Disordered regions lie at residues 364–383 (PLRG…PRPL) and 539–568 (PEEK…HEKR). Positions 392 to 561 (TNLMVSTAVE…IEEARRHGMP (170 aa)) are DNA-binding JBP1 domain. Residues 539–557 (PEEKKRRMERKQRIEEARR) are compositionally biased toward basic and acidic residues.

This sequence belongs to the TET family. JBP1 subfamily. As to quaternary structure, monomer. Binds to DNA as a monomer. Fe(2+) is required as a cofactor.

It is found in the nucleus. It catalyses the reaction thymine + 2-oxoglutarate + O2 = 5-hydroxymethyluracil + succinate + CO2. Dioxygenase that catalyzes the first step of DNA base J (beta-d-glucosyl-HOMedU) biosynthesis by converting thymine to 5-hydroxymethyluracil (HOMedU). DNA base J is a hypermodified thymidine residue found in the genome of kinetoplastid parasites, which is localized primarily to repetitive DNA, namely the telomeres, and is implicated in the regulation of antigenic variation. Also specifically binds to base J-containing DNA (J-DNA). Involved in propagation and maintenance of DNA base J synthesis initiated by JBP2 by specifically binding already synthesized DNA base J and propagating J synthesis. Thymine dioxygenase activity and J-DNA-binding are independent functions. This Leishmania tarentolae (Sauroleishmania tarentolae) protein is Thymine dioxygenase JBP1 (JBP1).